Here is a 527-residue protein sequence, read N- to C-terminus: Eukaryotic translation initiation factor 2 subunit gamma (527 aa).

Residues 1 to 83 (MSDLQDQEPS…GLPEQPLNPD (83 aa)) are disordered. T60 carries the post-translational modification Phosphothreonine. The region spanning 98–307 (QATINIGTIG…IVKTIPVPPR (210 aa)) is the tr-type G domain. The G1 stretch occupies residues 107–114 (GHVAHGKS). 110–115 (AHGKST) contacts GTP. Residues 135–139 (NITIK) are G2. Residues 193–196 (DCPG) form a G3 region. 249–252 (NKVD) lines the GTP pocket. The G4 stretch occupies residues 249–252 (NKVD). Phosphoserine is present on S258. Residue 284 to 286 (SAQ) participates in GTP binding. Positions 284-286 (SAQ) are G5. The tract at residues 515-527 (ATIKKGTTLEPIA) is interacts with CDC123.

It belongs to the TRAFAC class translation factor GTPase superfamily. Classic translation factor GTPase family. EIF2G subfamily. In terms of assembly, eukaryotic translation initiation factor 2 eIF2 is a heterotrimeric complex composed of an alpha, a beta and a gamma subunit. The factors eIF-1, eIF-1A, eIF-2, eIF-3, TIF5/eIF-5 and methionyl-tRNAi form a multifactor complex (MFC) that may bind to the 40S ribosome. Interacts (via C-terminus) with CDC123; the interaction is direct. Interacts with GCD1. Interacts with the eIF2B complex subunits GCD6 and GCD7. Interacts with methionyl-initiator methionine tRNA.

It is found in the cytoplasm. The protein resides in the cytosol. It catalyses the reaction GTP + H2O = GDP + phosphate + H(+). In terms of biological role, as a subunit of eukaryotic initiation factor 2 eIF2, involved in the early steps of protein synthesis. In the presence of GTP, eIF-2 forms a ternary complex with initiator tRNA Met-tRNAi and then recruits the 40S ribosomal complex and initiation factors eIF-1, eIF-1A and eIF-3 to form the 43S pre-initiation complex (43S PIC), a step that determines the rate of protein translation. The 43S PIC binds to mRNA and scans downstream to the initiation codon, where it forms a 48S initiation complex by codon-anticodon base pairing. This leads to the displacement of eIF-1 to allow GTPase-activating protein (GAP) eIF-5-mediated hydrolysis of eIF2-bound GTP. Hydrolysis of GTP and release of Pi, which makes GTP hydrolysis irreversible, causes the release of the eIF-2-GDP binary complex from the 40S subunit, an event that is essential for the subsequent joining of the 60S ribosomal subunit to form an elongation-competent 80S ribosome. In order for eIF-2 to recycle and catalyze another round of initiation, the GDP bound to eIF-2 must be exchanged with GTP by way of a reaction catalyzed by GDP-GTP exchange factor (GEF) eIF-2B. This chain is Eukaryotic translation initiation factor 2 subunit gamma (GCD11), found in Saccharomyces cerevisiae (strain ATCC 204508 / S288c) (Baker's yeast).